The sequence spans 339 residues: Glycerol-3-phosphate dehydrogenase [NAD(P)+] (339 aa).

Residues Ser-15, Tyr-16, His-36, and Lys-110 each coordinate NADPH. Sn-glycerol 3-phosphate contacts are provided by Lys-110, Gly-139, and Thr-141. Position 143 (Ala-143) interacts with NADPH. 5 residues coordinate sn-glycerol 3-phosphate: Lys-195, Asp-248, Ser-258, Arg-259, and Asn-260. Lys-195 acts as the Proton acceptor in catalysis. Residue Arg-259 participates in NADPH binding. Residues Val-283 and Glu-285 each contribute to the NADPH site.

Belongs to the NAD-dependent glycerol-3-phosphate dehydrogenase family.

The protein resides in the cytoplasm. It catalyses the reaction sn-glycerol 3-phosphate + NAD(+) = dihydroxyacetone phosphate + NADH + H(+). It carries out the reaction sn-glycerol 3-phosphate + NADP(+) = dihydroxyacetone phosphate + NADPH + H(+). The protein operates within membrane lipid metabolism; glycerophospholipid metabolism. In terms of biological role, catalyzes the reduction of the glycolytic intermediate dihydroxyacetone phosphate (DHAP) to sn-glycerol 3-phosphate (G3P), the key precursor for phospholipid synthesis. In Erwinia tasmaniensis (strain DSM 17950 / CFBP 7177 / CIP 109463 / NCPPB 4357 / Et1/99), this protein is Glycerol-3-phosphate dehydrogenase [NAD(P)+].